We begin with the raw amino-acid sequence, 571 residues long: Streptolysin O (571 aa).

A signal peptide spans methionine 1 to serine 33. Positions asparagine 30–glutamate 108 are disordered. Residues asparagine 37–glutamate 48 show a composition bias toward low complexity. 2 stretches are compositionally biased toward basic and acidic residues: residues proline 50–aspartate 68 and alanine 79–glutamate 108. 4 beta stranded membrane passes run lysine 260–isoleucine 273, isoleucine 280–glutamate 289, serine 358–alanine 367, and lysine 375–serine 387. A Conserved undecapeptide motif is present at residues glutamate 529–arginine 539. The short motif at threonine 561–leucine 562 is the Cholesterol binding element.

Belongs to the cholesterol-dependent cytolysin family. As to quaternary structure, homooligomeric pore complex of 35 to 50 subunits; when inserted in the host membrane.

Its subcellular location is the secreted. It localises to the host cell membrane. In terms of biological role, a cholesterol-dependent toxin that causes cytolysis by forming pores in cholesterol containing host membranes. After binding to target membranes, the protein undergoes a major conformation change, leading to its insertion in the host membrane and formation of an oligomeric pore complex. Cholesterol is required for binding to host membranes, membrane insertion and pore formation; cholesterol binding is mediated by a Thr-Leu pair in the C-terminus. Can be reversibly inactivated by oxidation. The protein is Streptolysin O (slo) of Streptococcus pyogenes serotype M18 (strain MGAS8232).